The following is a 303-amino-acid chain: UDP-N-acetylenolpyruvoylglucosamine reductase (303 aa).

One can recognise an FAD-binding PCMH-type domain in the interval 29 to 196 (KIGGPADVLV…LEAVLQLEQK (168 aa)). The active site involves arginine 174. Serine 225 functions as the Proton donor in the catalytic mechanism. The active site involves glutamate 295.

It belongs to the MurB family. The cofactor is FAD.

Its subcellular location is the cytoplasm. The enzyme catalyses UDP-N-acetyl-alpha-D-muramate + NADP(+) = UDP-N-acetyl-3-O-(1-carboxyvinyl)-alpha-D-glucosamine + NADPH + H(+). Its pathway is cell wall biogenesis; peptidoglycan biosynthesis. Its function is as follows. Cell wall formation. The chain is UDP-N-acetylenolpyruvoylglucosamine reductase (murB) from Bacillus subtilis (strain 168).